A 558-amino-acid polypeptide reads, in one-letter code: Membrane protein insertase YidC (558 aa).

5 helical membrane-spanning segments follow: residues 3–23 (IKRT…FDNW), 364–384 (FVGN…AVFF), 438–458 (LPVV…LASV), 477–497 (PYFI…KLNP), and 508–528 (MMFM…GLVL).

It belongs to the OXA1/ALB3/YidC family. Type 1 subfamily. Interacts with the Sec translocase complex via SecD. Specifically interacts with transmembrane segments of nascent integral membrane proteins during membrane integration.

Its subcellular location is the cell inner membrane. In terms of biological role, required for the insertion and/or proper folding and/or complex formation of integral membrane proteins into the membrane. Involved in integration of membrane proteins that insert both dependently and independently of the Sec translocase complex, as well as at least some lipoproteins. Aids folding of multispanning membrane proteins. The sequence is that of Membrane protein insertase YidC from Burkholderia pseudomallei (strain 668).